Consider the following 523-residue polypeptide: Carboxypeptidase Y (523 aa).

Positions 1-20 (MILHTYIILSLLTIFPKAIG) are cleaved as a signal peptide. A propeptide spanning residues 21–107 (LSLQMPMALE…QELPNYRLRV (87 aa)) is cleaved from the precursor. Cystine bridges form between cysteine 162–cysteine 401, cysteine 296–cysteine 310, cysteine 320–cysteine 343, cysteine 327–cysteine 336, and cysteine 365–cysteine 371. The N-linked (GlcNAc...) asparagine glycan is linked to asparagine 193. Residue serine 249 is part of the active site. A glycan (N-linked (GlcNAc...) asparagine) is linked at asparagine 271. Aspartate 441 is a catalytic residue. N-linked (GlcNAc...) asparagine glycosylation is found at asparagine 484 and asparagine 487. Residue histidine 498 is part of the active site.

This sequence belongs to the peptidase S10 family.

The protein resides in the vacuole. The enzyme catalyses Release of a C-terminal amino acid with broad specificity.. In terms of biological role, involved in degradation of small peptides. This chain is Carboxypeptidase Y (PRC1), found in Komagataella phaffii (strain GS115 / ATCC 20864) (Yeast).